Reading from the N-terminus, the 158-residue chain is 2-C-methyl-D-erythritol 2,4-cyclodiphosphate synthase (158 aa).

A divalent metal cation contacts are provided by D9 and H11. Residues 9-11 (DVH) and 35-36 (HS) contribute to the 4-CDP-2-C-methyl-D-erythritol 2-phosphate site. Position 43 (H43) interacts with a divalent metal cation. 4-CDP-2-C-methyl-D-erythritol 2-phosphate contacts are provided by residues 57-59 (DIG), 62-66 (FPDTD), 101-107 (AQKPKML), 133-136 (TTTE), F140, and R143.

It belongs to the IspF family. Homotrimer. Requires a divalent metal cation as cofactor.

The enzyme catalyses 4-CDP-2-C-methyl-D-erythritol 2-phosphate = 2-C-methyl-D-erythritol 2,4-cyclic diphosphate + CMP. It functions in the pathway isoprenoid biosynthesis; isopentenyl diphosphate biosynthesis via DXP pathway; isopentenyl diphosphate from 1-deoxy-D-xylulose 5-phosphate: step 4/6. Involved in the biosynthesis of isopentenyl diphosphate (IPP) and dimethylallyl diphosphate (DMAPP), two major building blocks of isoprenoid compounds. Catalyzes the conversion of 4-diphosphocytidyl-2-C-methyl-D-erythritol 2-phosphate (CDP-ME2P) to 2-C-methyl-D-erythritol 2,4-cyclodiphosphate (ME-CPP) with a corresponding release of cytidine 5-monophosphate (CMP). The protein is 2-C-methyl-D-erythritol 2,4-cyclodiphosphate synthase of Bacillus subtilis (strain 168).